Reading from the N-terminus, the 388-residue chain is tRNA 2-selenouridine synthase (388 aa).

In terms of domain architecture, Rhodanese spans 15-138 (FTADTPLIDV…ARQFLINTID (124 aa)). The active-site S-selanylcysteine intermediate is the Cys-98.

It belongs to the SelU family. In terms of assembly, monomer.

The catalysed reaction is 5-methylaminomethyl-2-thiouridine(34) in tRNA + selenophosphate + (2E)-geranyl diphosphate + H2O + H(+) = 5-methylaminomethyl-2-selenouridine(34) in tRNA + (2E)-thiogeraniol + phosphate + diphosphate. The enzyme catalyses 5-methylaminomethyl-2-thiouridine(34) in tRNA + (2E)-geranyl diphosphate = 5-methylaminomethyl-S-(2E)-geranyl-thiouridine(34) in tRNA + diphosphate. It carries out the reaction 5-methylaminomethyl-S-(2E)-geranyl-thiouridine(34) in tRNA + selenophosphate + H(+) = 5-methylaminomethyl-2-(Se-phospho)selenouridine(34) in tRNA + (2E)-thiogeraniol. It catalyses the reaction 5-methylaminomethyl-2-(Se-phospho)selenouridine(34) in tRNA + H2O = 5-methylaminomethyl-2-selenouridine(34) in tRNA + phosphate. Involved in the post-transcriptional modification of the uridine at the wobble position (U34) of tRNA(Lys), tRNA(Glu) and tRNA(Gln). Catalyzes the conversion of 2-thiouridine (S2U-RNA) to 2-selenouridine (Se2U-RNA). Acts in a two-step process involving geranylation of 2-thiouridine (S2U) to S-geranyl-2-thiouridine (geS2U) and subsequent selenation of the latter derivative to 2-selenouridine (Se2U) in the tRNA chain. The sequence is that of tRNA 2-selenouridine synthase from Nitrosomonas eutropha (strain DSM 101675 / C91 / Nm57).